A 450-amino-acid chain; its full sequence is 23S rRNA (uracil(1939)-C(5))-methyltransferase RlmD (450 aa).

A disordered region spans residues 1–22 (MARNKGGLRFQPSGGARGPAIP). The region spanning 20–78 (AIPVGKKQRLTIERLAHDGRGIAHEAGMTWFVSGGLPGEELEARVLGARSKVVDARSER) is the TRAM domain. C91, C97, C100, and C179 together coordinate [4Fe-4S] cluster. The S-adenosyl-L-methionine site is built by Q283, F312, N317, E333, D360, and D381. The active-site Nucleophile is the C407.

Belongs to the class I-like SAM-binding methyltransferase superfamily. RNA M5U methyltransferase family. RlmD subfamily.

It catalyses the reaction uridine(1939) in 23S rRNA + S-adenosyl-L-methionine = 5-methyluridine(1939) in 23S rRNA + S-adenosyl-L-homocysteine + H(+). In terms of biological role, catalyzes the formation of 5-methyl-uridine at position 1939 (m5U1939) in 23S rRNA. This Pseudomonas aeruginosa (strain UCBPP-PA14) protein is 23S rRNA (uracil(1939)-C(5))-methyltransferase RlmD.